We begin with the raw amino-acid sequence, 393 residues long: D-alanyl-D-alanine carboxypeptidase DacA (393 aa).

Positions 1-18 (MLKRTTKIAFLSSFVALS) are cleaved as a signal peptide. The Acyl-ester intermediate role is filled by S65. K68 acts as the Proton acceptor in catalysis. S128 is a catalytic residue. K231 provides a ligand contact to substrate.

The protein belongs to the peptidase S11 family.

It localises to the cell inner membrane. It carries out the reaction Preferential cleavage: (Ac)2-L-Lys-D-Ala-|-D-Ala. Also transpeptidation of peptidyl-alanyl moieties that are N-acyl substituents of D-alanine.. Its pathway is cell wall biogenesis; peptidoglycan biosynthesis. In terms of biological role, removes C-terminal D-alanyl residues from sugar-peptide cell wall precursors. This is D-alanyl-D-alanine carboxypeptidase DacA (dacA) from Haemophilus influenzae (strain ATCC 51907 / DSM 11121 / KW20 / Rd).